A 284-amino-acid chain; its full sequence is Bifunctional protein FolD (284 aa).

NADP(+) contacts are provided by residues 163–165 (GRS), S188, and I229.

The protein belongs to the tetrahydrofolate dehydrogenase/cyclohydrolase family. As to quaternary structure, homodimer.

The enzyme catalyses (6R)-5,10-methylene-5,6,7,8-tetrahydrofolate + NADP(+) = (6R)-5,10-methenyltetrahydrofolate + NADPH. The catalysed reaction is (6R)-5,10-methenyltetrahydrofolate + H2O = (6R)-10-formyltetrahydrofolate + H(+). The protein operates within one-carbon metabolism; tetrahydrofolate interconversion. In terms of biological role, catalyzes the oxidation of 5,10-methylenetetrahydrofolate to 5,10-methenyltetrahydrofolate and then the hydrolysis of 5,10-methenyltetrahydrofolate to 10-formyltetrahydrofolate. This chain is Bifunctional protein FolD, found in Campylobacter hominis (strain ATCC BAA-381 / DSM 21671 / CCUG 45161 / LMG 19568 / NCTC 13146 / CH001A).